The following is a 1384-amino-acid chain: ABC transporter C family member 2 (1384 aa).

The 285-residue stretch at 104 to 388 folds into the ABC transmembrane type-1 1 domain; the sequence is NKISVATKIF…LPEAIHRALS (285 aa). Transmembrane regions (helical) follow at residues 112-132, 140-160, 226-246, 247-267, and 333-353; these read IFVAIVSILSPLCLKYFIYYI, TFKFGFLLCVLLFLSSLSLTL, IFVFPFQILALLILLCWIVGL, SGLVGFGVMVVSIPLCTFLST, and MITQVTSALVLVATFSTYALT. Positions 505–724 constitute an ABC transporter 1 domain; the sequence is IEYDGAVQPS…GIDFESIMKT (220 aa). 537-544 is a binding site for ATP; that stretch reads GIVGSGKT. A disordered region spans residues 729-756; the sequence is IDENDQSSTSTTDKKSSTSSSSSELKKS. Residues 735–756 are compositionally biased toward low complexity; sequence SSTSTTDKKSSTSSSSSELKKS. A run of 5 helical transmembrane segments spans residues 813–833, 852–872, 941–961, 1036–1056, and 1061–1081; these read LFFLTCALYFISQIIFQLSDF, ILYYCIFIGAFIVFLVVRYFM, LFMMIYITPLISIPFAILVVV, GIRLEFITALIVFFTAFSSLF, and GFSVLAVTTALGICSYLNWTI. The ABC transmembrane type-1 2 domain occupies 814–1093; the sequence is FFLTCALYFI…MTELEVKMNS (280 aa). An ABC transporter 2 domain is found at 1137–1371; the sequence is VEFKNVEIKY…EGSRFKKLVK (235 aa). An ATP-binding site is contributed by 1171–1178; sequence GRTGAGKS.

This sequence belongs to the ABC transporter superfamily. ABCC family. Conjugate transporter (TC 3.A.1.208) subfamily.

It localises to the membrane. The protein is ABC transporter C family member 2 (abcC2) of Dictyostelium discoideum (Social amoeba).